The following is a 354-amino-acid chain: 3-isopropylmalate dehydrogenase (354 aa).

73 to 86 (GPAYDKLDRPLRPE) contributes to the NAD(+) binding site. Residues Arg93, Arg103, Arg131, and Asp221 each contribute to the substrate site. Positions 221, 245, and 249 each coordinate Mg(2+). 279–291 (GSAPDIAGQNLAN) contributes to the NAD(+) binding site.

This sequence belongs to the isocitrate and isopropylmalate dehydrogenases family. LeuB type 1 subfamily. Homodimer. It depends on Mg(2+) as a cofactor. Mn(2+) is required as a cofactor.

It is found in the cytoplasm. It catalyses the reaction (2R,3S)-3-isopropylmalate + NAD(+) = 4-methyl-2-oxopentanoate + CO2 + NADH. Its pathway is amino-acid biosynthesis; L-leucine biosynthesis; L-leucine from 3-methyl-2-oxobutanoate: step 3/4. Its function is as follows. Catalyzes the oxidation of 3-carboxy-2-hydroxy-4-methylpentanoate (3-isopropylmalate) to 3-carboxy-4-methyl-2-oxopentanoate. The product decarboxylates to 4-methyl-2 oxopentanoate. The chain is 3-isopropylmalate dehydrogenase from Chromobacterium violaceum (strain ATCC 12472 / DSM 30191 / JCM 1249 / CCUG 213 / NBRC 12614 / NCIMB 9131 / NCTC 9757 / MK).